A 410-amino-acid chain; its full sequence is BTB and MATH domain-containing protein 42 (410 aa).

Residues 1–19 (MSSRSSWSSTEQINRTISS) are compositionally biased toward polar residues. Positions 1–29 (MSSRSSWSSTEQINRTISSRADDLPPQPR) are disordered. Residues 45–173 (STKLEWKIEQ…DGTLFLICEV (129 aa)) enclose the MATH domain. A BTB domain is found at 219–287 (TDCVIHVGNK…MYTGATESLE (69 aa)). Residues 389–410 (TSNIPISVSPPPARKRLRRSAK) are disordered. Residues 401–410 (ARKRLRRSAK) are compositionally biased toward basic residues.

In terms of assembly, interacts with cul-3.

It participates in protein modification; protein ubiquitination. Probable substrate-specific adapter of an E3 ubiquitin-protein ligase complex which mediates the ubiquitination and subsequent proteasomal degradation of target proteins. The polypeptide is BTB and MATH domain-containing protein 42 (bath-42) (Caenorhabditis elegans).